The chain runs to 310 residues: MDKIFVDEAVNELQTIQDMLRWSVSRFSAANIWYGHGTDNPWDEAVQLVLPSLYLPLDIPEDMRTARLTSSEKHRIVERVIRRVNERIPVAYLTNKAWFCGHEFYVDERVLVPRSPIGELINNKFAGLISKQPQHILDMCTGSGCIAIACAYAFPEAEVDAVDISPDALAVAEQNIEEHGLIHNVIPIRSDLFRDLPKVQYDLIVTNPPYVDAEDMSDLPNEYRHEPELGLASGTDGLKLTRRILGNAADYLADDGVLICEVGNSMVHLMEQYPDVPFTWLEFDNGGDGVFMLTKEQLLAAREHFAIYKD.

It belongs to the protein N5-glutamine methyltransferase family. PrmB subfamily.

It catalyses the reaction L-glutaminyl-[ribosomal protein uL3] + S-adenosyl-L-methionine = N(5)-methyl-L-glutaminyl-[ribosomal protein uL3] + S-adenosyl-L-homocysteine + H(+). Specifically methylates large ribosomal subunit protein uL3 on 'Gln-150'. The sequence is that of Ribosomal protein uL3 glutamine methyltransferase from Shigella dysenteriae serotype 1 (strain Sd197).